The sequence spans 474 residues: Tubulin gamma-2 chain (474 aa).

142-148 (AGGTGSG) contacts GTP.

This sequence belongs to the tubulin family. Gamma-tubulin complex is composed of gamma-tubulin and GCP proteins.

The protein resides in the cytoplasm. The protein localises to the cytoskeleton. Its subcellular location is the microtubule organizing center. It is found in the nucleus. It localises to the cell cortex. In terms of biological role, tubulin is the major constituent of microtubules. The gamma chain is found at microtubule organizing centers (MTOC) such as the spindle poles, suggesting that it is involved in the minus-end nucleation of microtubule assembly. Gamma-tubulin complex is essential for the control of microtubular network remodeling in the course of initiation and development of giant-feeding cells, and for the successful reproduction of nematodes (e.g. Meloidogyne spp.) in their plant hosts. The polypeptide is Tubulin gamma-2 chain (TUBG2) (Arabidopsis thaliana (Mouse-ear cress)).